Reading from the N-terminus, the 266-residue chain is Type II pantothenate kinase (266 aa).

6–13 is a binding site for ATP; it reads DAGGTLIK. Glu-70 acts as the Proton acceptor in catalysis. ATP-binding positions include Thr-99, 121-125, Tyr-137, and Ser-225; that span reads GGMIQ.

The protein belongs to the type II pantothenate kinase family. In terms of assembly, homodimer.

The protein resides in the cytoplasm. It carries out the reaction (R)-pantothenate + ATP = (R)-4'-phosphopantothenate + ADP + H(+). Its pathway is cofactor biosynthesis; coenzyme A biosynthesis; CoA from (R)-pantothenate: step 1/5. Its function is as follows. Catalyzes the phosphorylation of pantothenate (Pan), the first step in CoA biosynthesis. This Staphylococcus haemolyticus (strain JCSC1435) protein is Type II pantothenate kinase.